The sequence spans 158 residues: Snaclec mucetin subunit alpha (158 aa).

The signal sequence occupies residues 1-23 (MGRFTFVSFGLLVVFLSLSGTGA). 3 disulfide bridges follow: C27–C38, C55–C152, and C127–C144. One can recognise a C-type lectin domain in the interval 34–153 (YDRYCYQAFS…CGRENPFVCK (120 aa)).

The protein belongs to the snaclec family. In terms of assembly, dimer and tetramer of heterodimers of alpha and beta subunits ((alphabeta)(2) and (alphabeta)(4)); disulfide-linked. These two multimeric forms are found. In terms of processing, the complex is glycosylated. In terms of tissue distribution, expressed by the venom gland.

It is found in the secreted. Potent platelet activator that acts via GPIb (GP1BA/GP1BB). After activation by the toxin, the receptor is redistributed on platelet surface thanks to cytoskeletal translocation. The indirect activation of integrin alpha-IIb/beta-3 (ITGA2B/ITGB3) also induced by the toxin is downstream the cytoskeletal translocation of GPIb. The sequence is that of Snaclec mucetin subunit alpha from Protobothrops mucrosquamatus (Taiwan habu).